A 107-amino-acid chain; its full sequence is Early E3A 12.5 kDa protein (107 aa).

It belongs to the adenoviridae E3A-2 family.

The chain is Early E3A 12.5 kDa protein from Homo sapiens (Human).